The following is a 468-amino-acid chain: Citrate synthase, mitochondrial (468 aa).

The N-terminal 30 residues, 1–30 (MSLISAGRVCARILGAKNSPCALIAARQAS), are a transit peptide targeting the mitochondrion. Residues His303 and His349 contribute to the active site. Residue Arg358 participates in oxaloacetate binding. Asp404 is an active-site residue. Residues Arg430 and Arg450 each contribute to the oxaloacetate site.

It belongs to the citrate synthase family. As to quaternary structure, homodimer.

It is found in the mitochondrion matrix. The enzyme catalyses oxaloacetate + acetyl-CoA + H2O = citrate + CoA + H(+). Its pathway is carbohydrate metabolism; tricarboxylic acid cycle; isocitrate from oxaloacetate: step 1/2. Its function is as follows. Key enzyme of the Krebs tricarboxylic acid cycle which catalyzes the synthesis of citrate from acetyl coenzyme A and oxaloacetate. This chain is Citrate synthase, mitochondrial (cs), found in Xenopus laevis (African clawed frog).